A 406-amino-acid chain; its full sequence is MAAAVRQDLAQLMNSSGSHKDLAGKYRQILEKAIQLSGAEQLEALKAFVESMVNENVSLVISRQLLTDFCTHLPNLPDSTAKEIYHFTLEKIQPRVISFEEQVASIRQHLASIYEKEEDWRNAAQVLVGIPLETGQKQYNVDYKLETYLKIARLYLEDDDPVQAEAYINRASLLQNESTNEQLQIHYKVCYARVLDYRRKFIEAAQRYNELSYKTIVHESERLEALKHALHCTILASAGQQRSRMLATLFKDERCQQLAAYGILEKMYLDRIIRGNQLQEFAAMLMPHQKATTADGSSILDRAVIEHNLLSASKLYNNITFEELGALLEIPAAKAEKIASQMITEGRMNGFIDQIDGIVHFETREALPTWDKQIQSLCFQVNNLLEKISQTAPEWTAQAMEAQMAQ.

Alanine 2 is modified (N-acetylalanine). Lysine 25 carries the post-translational modification N6-acetyllysine. The PCI domain occupies 197 to 366 (YRRKFIEAAQ…GIVHFETREA (170 aa)).

It belongs to the CSN4 family. As to quaternary structure, component of the CSN complex, composed of COPS1/GPS1, COPS2, COPS3, COPS4, COPS5, COPS6, COPS7 (COPS7A or COPS7B), COPS8 and COPS9. In the complex, it probably interacts directly with COPS1, COPS2, COPS3, COPS5, COPS6, COPS7 (COPS7A or COPS7B) and COPS8. Interacts with TOR1A; the interaction is direct and associates TOR1A and SNAPIN with the CSN complex. Interacts with STON2; controls STON2 neddylation levels. Interacts with ERCC6.

Its subcellular location is the cytoplasm. It localises to the nucleus. It is found in the cytoplasmic vesicle. The protein resides in the secretory vesicle. The protein localises to the synaptic vesicle. Component of the COP9 signalosome complex (CSN), a complex involved in various cellular and developmental processes. The CSN complex is an essential regulator of the ubiquitin (Ubl) conjugation pathway by mediating the deneddylation of the cullin subunits of SCF-type E3 ligase complexes, leading to decrease the Ubl ligase activity of SCF-type complexes such as SCF, CSA or DDB2. Also involved in the deneddylation of non-cullin subunits such as STON2. The complex is also involved in phosphorylation of p53/TP53, c-jun/JUN, IkappaBalpha/NFKBIA, ITPK1, IRF8/ICSBP and SNAPIN, possibly via its association with CK2 and PKD kinases. CSN-dependent phosphorylation of TP53 and JUN promotes and protects degradation by the Ubl system, respectively. The chain is COP9 signalosome complex subunit 4 (COPS4) from Bos taurus (Bovine).